Consider the following 501-residue polypeptide: Glycerol kinase (501 aa).

Thr11 contacts ADP. Thr11, Thr12, and Ser13 together coordinate ATP. Thr11 serves as a coordination point for sn-glycerol 3-phosphate. Position 15 (Arg15) interacts with ADP. Positions 81, 82, 133, and 242 each coordinate sn-glycerol 3-phosphate. Glycerol is bound by residues Arg81, Glu82, Tyr133, Asp242, and Gln243. The ADP site is built by Thr264 and Gly307. 4 residues coordinate ATP: Thr264, Gly307, Gln311, and Gly409. ADP-binding residues include Gly409 and Asn413.

It belongs to the FGGY kinase family.

The enzyme catalyses glycerol + ATP = sn-glycerol 3-phosphate + ADP + H(+). It functions in the pathway polyol metabolism; glycerol degradation via glycerol kinase pathway; sn-glycerol 3-phosphate from glycerol: step 1/1. Its activity is regulated as follows. Inhibited by fructose 1,6-bisphosphate (FBP). Key enzyme in the regulation of glycerol uptake and metabolism. Catalyzes the phosphorylation of glycerol to yield sn-glycerol 3-phosphate. This chain is Glycerol kinase, found in Borreliella burgdorferi (strain ATCC 35210 / DSM 4680 / CIP 102532 / B31) (Borrelia burgdorferi).